The primary structure comprises 197 residues: Ribosome maturation factor RimM (197 aa).

The 73-residue stretch at 92–164 folds into the PRC barrel domain; it reads DEGWYEHELV…YILVTPPPGL (73 aa). The segment at 167-197 is disordered; that stretch reads INVEDSGETSDAGESGPGEAEPGKAEAGDNA. The segment covering 176–186 has biased composition (low complexity); that stretch reads SDAGESGPGEA. A compositionally biased stretch (basic and acidic residues) spans 187 to 197; it reads EPGKAEAGDNA.

This sequence belongs to the RimM family. As to quaternary structure, binds ribosomal protein uS19.

Its subcellular location is the cytoplasm. In terms of biological role, an accessory protein needed during the final step in the assembly of 30S ribosomal subunit, possibly for assembly of the head region. Essential for efficient processing of 16S rRNA. May be needed both before and after RbfA during the maturation of 16S rRNA. It has affinity for free ribosomal 30S subunits but not for 70S ribosomes. In Arthrobacter sp. (strain FB24), this protein is Ribosome maturation factor RimM.